A 417-amino-acid polypeptide reads, in one-letter code: Glutamyl-tRNA reductase (417 aa).

Substrate-binding positions include 49-52 (TCNR), S105, 110-112 (ETQ), and Q116. C50 functions as the Nucleophile in the catalytic mechanism. Residue 185–190 (GAGEMI) coordinates NADP(+).

This sequence belongs to the glutamyl-tRNA reductase family. In terms of assembly, homodimer.

The enzyme catalyses (S)-4-amino-5-oxopentanoate + tRNA(Glu) + NADP(+) = L-glutamyl-tRNA(Glu) + NADPH + H(+). Its pathway is porphyrin-containing compound metabolism; protoporphyrin-IX biosynthesis; 5-aminolevulinate from L-glutamyl-tRNA(Glu): step 1/2. In terms of biological role, catalyzes the NADPH-dependent reduction of glutamyl-tRNA(Glu) to glutamate 1-semialdehyde (GSA). This is Glutamyl-tRNA reductase from Chromobacterium violaceum (strain ATCC 12472 / DSM 30191 / JCM 1249 / CCUG 213 / NBRC 12614 / NCIMB 9131 / NCTC 9757 / MK).